The chain runs to 218 residues: uncharacterized protein (218 aa).

Residues 2-216 (IEVLNLTKKI…ETSEKVIYKK (215 aa)) form the ABC transporter domain. Residue 34-41 (GSNGSGKT) coordinates ATP.

Belongs to the ABC transporter superfamily.

This is an uncharacterized protein from Bacillus subtilis (strain 168).